A 209-amino-acid chain; its full sequence is Redox-sensing transcriptional repressor Rex (209 aa).

Positions 16 to 55 (LYYRFIQNLSLSGKQRVSSAELSEAVKVDSATIRRDFSYF) form a DNA-binding region, H-T-H motif. 90–95 (GVGNLG) lines the NAD(+) pocket.

Belongs to the transcriptional regulatory Rex family. As to quaternary structure, homodimer.

The protein resides in the cytoplasm. Functionally, modulates transcription in response to changes in cellular NADH/NAD(+) redox state. The protein is Redox-sensing transcriptional repressor Rex of Bacillus mycoides (strain KBAB4) (Bacillus weihenstephanensis).